The primary structure comprises 332 residues: L-lactate dehydrogenase A chain (332 aa).

At A2 the chain carries N-acetylalanine. K5 is modified (N6-acetyllysine; alternate). An N6-succinyllysine; alternate modification is found at K5. K14 bears the N6-acetyllysine mark. A Phosphothreonine modification is found at T18. 29–57 is an NAD(+) binding site; the sequence is GAVGMACAISILMKDLADELALVDVIEDK. K57 bears the N6-acetyllysine; alternate mark. K57 is covalently cross-linked (Glycyl lysine isopeptide (Lys-Gly) (interchain with G-Cter in SUMO2); alternate). At K81 the chain carries N6-acetyllysine. R99 contacts NAD(+). Position 106 (R106) interacts with substrate. K118 bears the N6-acetyllysine; alternate mark. K118 bears the N6-succinyllysine; alternate mark. Position 126 is an N6-acetyllysine (K126). Residues N138 and R169 each contribute to the substrate site. H193 (proton acceptor) is an active-site residue. N6-acetyllysine is present on residues K224 and K232. Phosphotyrosine is present on Y239. An N6-acetyllysine modification is found at K243. Residue T248 coordinates substrate. T309 bears the Phosphothreonine mark. Position 310 is a phosphoserine (S310). The residue at position 318 (K318) is an N6-acetyllysine; alternate. Residue K318 is modified to N6-succinyllysine; alternate. T322 bears the Phosphothreonine mark.

This sequence belongs to the LDH/MDH superfamily. LDH family. Homotetramer. Interacts with PTEN upstream reading frame protein MP31. ISGylated.

The protein resides in the cytoplasm. The enzyme catalyses (S)-lactate + NAD(+) = pyruvate + NADH + H(+). It functions in the pathway fermentation; pyruvate fermentation to lactate; (S)-lactate from pyruvate: step 1/1. Interconverts simultaneously and stereospecifically pyruvate and lactate with concomitant interconversion of NADH and NAD(+). The sequence is that of L-lactate dehydrogenase A chain (LDHA) from Pan troglodytes (Chimpanzee).